Reading from the N-terminus, the 544-residue chain is Exodeoxyribonuclease 7 large subunit (544 aa).

The disordered stretch occupies residues 522-544 (PETPPKSRKADNPPEPPEQTSFL).

Belongs to the XseA family. Heterooligomer composed of large and small subunits.

The protein resides in the cytoplasm. It catalyses the reaction Exonucleolytic cleavage in either 5'- to 3'- or 3'- to 5'-direction to yield nucleoside 5'-phosphates.. Bidirectionally degrades single-stranded DNA into large acid-insoluble oligonucleotides, which are then degraded further into small acid-soluble oligonucleotides. In Zymomonas mobilis subsp. mobilis (strain ATCC 31821 / ZM4 / CP4), this protein is Exodeoxyribonuclease 7 large subunit.